Consider the following 154-residue polypeptide: MNIIEGSFEAKGKKFAIVVSRFNHFIVDSLLDGAVDALKRHGNVNDEDITIVRVPGAYELPLAAKKIAKKGEADAIIAIGAVIRGGTPHFDFVAGESNKGLAQVCLESEIPVSFGVITTDSIEQAIERAGTKAGNKGAEAALGALEMVNVLAQI.

5-amino-6-(D-ribitylamino)uracil is bound by residues Phe22, 57 to 59 (AYE), and 81 to 83 (AVI). A (2S)-2-hydroxy-3-oxobutyl phosphate-binding site is contributed by 86–87 (GT). His89 acts as the Proton donor in catalysis. Phe114 contributes to the 5-amino-6-(D-ribitylamino)uracil binding site. Position 128 (Arg128) interacts with (2S)-2-hydroxy-3-oxobutyl phosphate.

The protein belongs to the DMRL synthase family. Forms an icosahedral capsid composed of 60 subunits, arranged as a dodecamer of pentamers.

It catalyses the reaction (2S)-2-hydroxy-3-oxobutyl phosphate + 5-amino-6-(D-ribitylamino)uracil = 6,7-dimethyl-8-(1-D-ribityl)lumazine + phosphate + 2 H2O + H(+). Its pathway is cofactor biosynthesis; riboflavin biosynthesis; riboflavin from 2-hydroxy-3-oxobutyl phosphate and 5-amino-6-(D-ribitylamino)uracil: step 1/2. Catalyzes the formation of 6,7-dimethyl-8-ribityllumazine by condensation of 5-amino-6-(D-ribitylamino)uracil with 3,4-dihydroxy-2-butanone 4-phosphate. This is the penultimate step in the biosynthesis of riboflavin. This Colwellia psychrerythraea (strain 34H / ATCC BAA-681) (Vibrio psychroerythus) protein is 6,7-dimethyl-8-ribityllumazine synthase.